Here is a 223-residue protein sequence, read N- to C-terminus: Endonuclease V (223 aa).

The Mg(2+) site is built by D35 and D103.

Belongs to the endonuclease V family. It depends on Mg(2+) as a cofactor.

Its subcellular location is the cytoplasm. The catalysed reaction is Endonucleolytic cleavage at apurinic or apyrimidinic sites to products with a 5'-phosphate.. Its function is as follows. DNA repair enzyme involved in the repair of deaminated bases. Selectively cleaves double-stranded DNA at the second phosphodiester bond 3' to a deoxyinosine leaving behind the intact lesion on the nicked DNA. The polypeptide is Endonuclease V (Escherichia coli O139:H28 (strain E24377A / ETEC)).